The following is a 280-amino-acid chain: Pantothenate synthetase (280 aa).

31 to 38 (MGNLHVGH) contributes to the ATP binding site. The active-site Proton donor is His-38. Gln-62 provides a ligand contact to (R)-pantoate. Residue Gln-62 participates in beta-alanine binding. 150–153 (GKKD) lines the ATP pocket. A (R)-pantoate-binding site is contributed by Gln-156. ATP is bound by residues Val-179 and 187–190 (MSSR).

This sequence belongs to the pantothenate synthetase family. As to quaternary structure, homodimer.

Its subcellular location is the cytoplasm. The enzyme catalyses (R)-pantoate + beta-alanine + ATP = (R)-pantothenate + AMP + diphosphate + H(+). The protein operates within cofactor biosynthesis; (R)-pantothenate biosynthesis; (R)-pantothenate from (R)-pantoate and beta-alanine: step 1/1. Functionally, catalyzes the condensation of pantoate with beta-alanine in an ATP-dependent reaction via a pantoyl-adenylate intermediate. This chain is Pantothenate synthetase, found in Xanthomonas oryzae pv. oryzae (strain KACC10331 / KXO85).